A 169-amino-acid chain; its full sequence is Myosin regulatory light chain 11 (169 aa).

Ala-2 bears the N,N,N-trimethylalanine mark. Ser-15 and Ser-16 each carry phosphoserine. 2 positions are modified to phosphothreonine: Thr-25 and Thr-35. One can recognise an EF-hand 1 domain in the interval 25-60 (TQIQEFKEAFTVIDQNRDGIIDKEDLRDTFAAMGRL). Ca(2+) is bound by residues Asp-38, Asn-40, Asp-42, and Asp-49. At Ser-75 the chain carries Phosphoserine. EF-hand domains follow at residues 95–130 (DPED…QCDR) and 131–166 (FSQE…GDAK). Residue Thr-101 is modified to Phosphothreonine.

As to quaternary structure, myosin is a hexamer of 2 heavy chains and 4 light chains.

Its function is as follows. Myosin regulatory subunit that plays an essential to maintain muscle integrity during early development. Plays a role in muscle contraction. The chain is Myosin regulatory light chain 11 (Myl11) from Rattus norvegicus (Rat).